Here is a 473-residue protein sequence, read N- to C-terminus: Ribulose bisphosphate carboxylase large chain (473 aa).

The propeptide occupies 1 to 2 (MS). The residue at position 3 (Pro3) is an N-acetylproline. Lys14 bears the N6,N6,N6-trimethyllysine mark. Residues Asn123 and Thr173 each contribute to the substrate site. The active-site Proton acceptor is Lys175. Substrate is bound at residue Lys177. The Mg(2+) site is built by Lys201, Asp203, and Glu204. N6-carboxylysine is present on Lys201. The Proton acceptor role is filled by His294. 3 residues coordinate substrate: Arg295, His327, and Ser379.

This sequence belongs to the RuBisCO large chain family. Type I subfamily. Heterohexadecamer of 8 large chains and 8 small chains; disulfide-linked. The disulfide link is formed within the large subunit homodimers. Requires Mg(2+) as cofactor. In terms of processing, the disulfide bond which can form in the large chain dimeric partners within the hexadecamer appears to be associated with oxidative stress and protein turnover.

It localises to the plastid. The protein localises to the chloroplast. The catalysed reaction is 2 (2R)-3-phosphoglycerate + 2 H(+) = D-ribulose 1,5-bisphosphate + CO2 + H2O. It carries out the reaction D-ribulose 1,5-bisphosphate + O2 = 2-phosphoglycolate + (2R)-3-phosphoglycerate + 2 H(+). In terms of biological role, ruBisCO catalyzes two reactions: the carboxylation of D-ribulose 1,5-bisphosphate, the primary event in carbon dioxide fixation, as well as the oxidative fragmentation of the pentose substrate in the photorespiration process. Both reactions occur simultaneously and in competition at the same active site. This is Ribulose bisphosphate carboxylase large chain from Cajanus cajan (Pigeon pea).